Reading from the N-terminus, the 144-residue chain is Large ribosomal subunit protein uL16 (144 aa).

This sequence belongs to the universal ribosomal protein uL16 family. Part of the 50S ribosomal subunit.

Functionally, binds 23S rRNA and is also seen to make contacts with the A and possibly P site tRNAs. The chain is Large ribosomal subunit protein uL16 from Oceanobacillus iheyensis (strain DSM 14371 / CIP 107618 / JCM 11309 / KCTC 3954 / HTE831).